Consider the following 129-residue polypeptide: CD59B glycoprotein (129 aa).

A signal peptide spans 1–23; it reads MRAQRGLILLLLLLAVFCSTAVS. The UPAR/Ly6 domain occupies 24 to 107; it reads LKCYNCLDPV…GLEEPNNAET (84 aa). Cystine bridges form between Cys-26-Cys-49, Cys-29-Cys-36, Cys-42-Cys-62, Cys-68-Cys-86, and Cys-87-Cys-92. An N-linked (GlcNAc...) asparagine glycan is attached at Asn-39. Residue Asn-104 is the site of GPI-anchor amidated asparagine attachment. A propeptide spans 105-129 (removed in mature form); it reads AETSSLRKTALLGTSVLVAILKFCF.

As to quaternary structure, interacts with T-cell surface antigen CD2. In terms of processing, N- and O-glycosylated. In terms of tissue distribution, widely expressed in the kidneys, brain, lungs, spleen and testis Testis-specific.

It is found in the cell membrane. The protein resides in the secreted. Potent inhibitor of the complement membrane attack complex (MAC) action, which protects self-cells from damage during complement activation. Acts by binding to the beta-haipins of C8 (C8A and C8B) components of the assembling MAC, forming an intermolecular beta-sheet that prevents incorporation of the multiple copies of C9 required for complete formation of the osmolytic pore. In Mus musculus (Mouse), this protein is CD59B glycoprotein.